A 513-amino-acid chain; its full sequence is 2-isopropylmalate synthase (513 aa).

In terms of domain architecture, Pyruvate carboxyltransferase spans 5 to 268 (LIIFDTTLRD…DVGVDTTQIV (264 aa)). Mn(2+)-binding residues include aspartate 14, histidine 202, histidine 204, and asparagine 239. The regulatory domain stretch occupies residues 394 to 513 (RFVSLSQRSE…KSSEKLNPQI (120 aa)).

This sequence belongs to the alpha-IPM synthase/homocitrate synthase family. LeuA type 1 subfamily. In terms of assembly, homodimer. The cofactor is Mn(2+).

It is found in the cytoplasm. The enzyme catalyses 3-methyl-2-oxobutanoate + acetyl-CoA + H2O = (2S)-2-isopropylmalate + CoA + H(+). The protein operates within amino-acid biosynthesis; L-leucine biosynthesis; L-leucine from 3-methyl-2-oxobutanoate: step 1/4. Its function is as follows. Catalyzes the condensation of the acetyl group of acetyl-CoA with 3-methyl-2-oxobutanoate (2-ketoisovalerate) to form 3-carboxy-3-hydroxy-4-methylpentanoate (2-isopropylmalate). This Ralstonia nicotianae (strain ATCC BAA-1114 / GMI1000) (Ralstonia solanacearum) protein is 2-isopropylmalate synthase.